Reading from the N-terminus, the 153-residue chain is UPF0260 protein YcgN (153 aa).

This sequence belongs to the UPF0260 family.

The chain is UPF0260 protein YcgN from Shigella boydii serotype 18 (strain CDC 3083-94 / BS512).